The primary structure comprises 223 residues: DNA mismatch repair protein MutH (223 aa).

It belongs to the MutH family.

The protein localises to the cytoplasm. Functionally, sequence-specific endonuclease that cleaves unmethylated GATC sequences. It is involved in DNA mismatch repair. This chain is DNA mismatch repair protein MutH, found in Shewanella baltica (strain OS185).